Consider the following 412-residue polypeptide: Putative competence-damage inducible protein (412 aa).

This sequence belongs to the CinA family.

The sequence is that of Putative competence-damage inducible protein from Bacillus cereus (strain AH187).